Here is a 408-residue protein sequence, read N- to C-terminus: Dihydrolipoyllysine-residue acetyltransferase component of pyruvate dehydrogenase complex (408 aa).

Residues 2–78 enclose the Lipoyl-binding domain; the sequence is PIKILMPALS…PVNSLIAVLS (77 aa). An N6-lipoyllysine modification is found at Lys43. In terms of domain architecture, Peripheral subunit-binding (PSBD) spans 128-165; that stretch reads FASPLAKRLAKIGDIRLENVQGSGPHGRIVKQDILSYD. Residue His381 is part of the active site.

The protein belongs to the 2-oxoacid dehydrogenase family. As to quaternary structure, forms a 24-polypeptide structural core with octahedral symmetry. The cofactor is (R)-lipoate.

It carries out the reaction N(6)-[(R)-dihydrolipoyl]-L-lysyl-[protein] + acetyl-CoA = N(6)-[(R)-S(8)-acetyldihydrolipoyl]-L-lysyl-[protein] + CoA. The pyruvate dehydrogenase complex catalyzes the overall conversion of pyruvate to acetyl-CoA and CO(2). It contains multiple copies of three enzymatic components: pyruvate dehydrogenase (E1), dihydrolipoamide acetyltransferase (E2) and lipoamide dehydrogenase (E3). The polypeptide is Dihydrolipoyllysine-residue acetyltransferase component of pyruvate dehydrogenase complex (pdhC) (Rickettsia prowazekii (strain Madrid E)).